Consider the following 672-residue polypeptide: Transcriptional regulator Kaiso (672 aa).

The segment at 1-103 (MESRKLISAT…RSDLLDELIK (103 aa)) is interaction with NCOR1. Residues 1–136 (MESRKLISAT…SGTAQDGNTE (136 aa)) are self-association. The BTB domain occupies 32-94 (CDVTVIVEDR…IYSSKIVRVR (63 aa)). Glycyl lysine isopeptide (Lys-Gly) (interchain with G-Cter in SUMO2) cross-links involve residues Lys-151 and Lys-153. The residue at position 251 (Thr-251) is a Phosphothreonine. Positions 298–573 (LPNHMPSSIN…FMSSHIKSVH (276 aa)) are interaction with CBFA2T3. The segment at 325–354 (KANEEEEEEIIDDDDDTISSSPDSAVSNTS) is disordered. Residues 328 to 341 (EEEEEEIIDDDDDT) are compositionally biased toward acidic residues. Glycyl lysine isopeptide (Lys-Gly) (interchain with G-Cter in SUMO2) cross-links involve residues Lys-390, Lys-407, Lys-414, Lys-449, Lys-465, Lys-474, and Lys-479. Positions 454-672 (EGEARLENEI…EFEFIIPESY (219 aa)) are interaction with CTNND1. Positions 471–480 (MANKRMKVKH) match the Nuclear localization signal motif. 3 C2H2-type zinc fingers span residues 494-516 (YICI…FNIH), 522-544 (YPCR…EIHH), and 550-573 (YQCL…KSVH). Residues 514–638 (NIHSWEKKYP…TTTSTQNKPM (125 aa)) form a required for DNA-binding region. Residues Lys-539, Lys-570, Lys-582, Lys-611, and Lys-618 each participate in a glycyl lysine isopeptide (Lys-Gly) (interchain with G-Cter in SUMO2) cross-link. The interval 616–635 (GYKVDTGKEPPVGTTTSTQN) is disordered.

As to quaternary structure, self-associates. Interacts with CTNND2. Interacts with CTNND1, and this interaction inhibits binding to both methylated and non-methylated DNA. Interacts with NCOR1. Interacts with KPNA2/RCH1, which may mediate nuclear import of this protein. Interacts with CBFA2T3. As to expression, expressed in vascular endothelium.

It localises to the nucleus. The protein localises to the cytoplasm. Transcriptional regulator with bimodal DNA-binding specificity. Binds to methylated CpG dinucleotides in the consensus sequence 5'-CGCG-3' and also binds to the non-methylated consensus sequence 5'-CTGCNA-3' also known as the consensus kaiso binding site (KBS). Recruits the N-CoR repressor complex to promote histone deacetylation and the formation of repressive chromatin structures in target gene promoters. May contribute to the repression of target genes of the Wnt signaling pathway. May also activate transcription of a subset of target genes by the recruitment of CTNND2. Represses expression of MMP7 in conjunction with transcriptional corepressors CBFA2T3, CBFA2T2 and RUNX1T1. This chain is Transcriptional regulator Kaiso (ZBTB33), found in Homo sapiens (Human).